The primary structure comprises 127 residues: Large ribosomal subunit protein uL22 (127 aa).

This sequence belongs to the universal ribosomal protein uL22 family. As to quaternary structure, part of the 50S ribosomal subunit.

Its function is as follows. This protein binds specifically to 23S rRNA; its binding is stimulated by other ribosomal proteins, e.g. L4, L17, and L20. It is important during the early stages of 50S assembly. It makes multiple contacts with different domains of the 23S rRNA in the assembled 50S subunit and ribosome. Functionally, the globular domain of the protein is located near the polypeptide exit tunnel on the outside of the subunit, while an extended beta-hairpin is found that lines the wall of the exit tunnel in the center of the 70S ribosome. In Brucella suis (strain ATCC 23445 / NCTC 10510), this protein is Large ribosomal subunit protein uL22.